The primary structure comprises 118 residues: Group 1 truncated hemoglobin GlbN (118 aa).

Histidine 70 is a heme binding site.

The protein belongs to the truncated hemoglobin family. Group I subfamily. Monomer. It depends on heme as a cofactor.

It is found in the membrane. The sequence is that of Group 1 truncated hemoglobin GlbN (glbN) from Nostoc commune.